We begin with the raw amino-acid sequence, 157 residues long: 2-C-methyl-D-erythritol 2,4-cyclodiphosphate synthase (157 aa).

Residues Asp-8 and His-10 each coordinate a divalent metal cation. Residues 8-10 and 34-35 each bind 4-CDP-2-C-methyl-D-erythritol 2-phosphate; these read DVH and HS. His-42 provides a ligand contact to a divalent metal cation. 4-CDP-2-C-methyl-D-erythritol 2-phosphate-binding positions include 56–58, 61–65, 100–106, 132–135, Phe-139, and Arg-142; these read DIG, FPDTD, AQAPKMA, and TTTE.

Belongs to the IspF family. As to quaternary structure, homotrimer. A divalent metal cation is required as a cofactor.

It carries out the reaction 4-CDP-2-C-methyl-D-erythritol 2-phosphate = 2-C-methyl-D-erythritol 2,4-cyclic diphosphate + CMP. Its pathway is isoprenoid biosynthesis; isopentenyl diphosphate biosynthesis via DXP pathway; isopentenyl diphosphate from 1-deoxy-D-xylulose 5-phosphate: step 4/6. In terms of biological role, involved in the biosynthesis of isopentenyl diphosphate (IPP) and dimethylallyl diphosphate (DMAPP), two major building blocks of isoprenoid compounds. Catalyzes the conversion of 4-diphosphocytidyl-2-C-methyl-D-erythritol 2-phosphate (CDP-ME2P) to 2-C-methyl-D-erythritol 2,4-cyclodiphosphate (ME-CPP) with a corresponding release of cytidine 5-monophosphate (CMP). The sequence is that of 2-C-methyl-D-erythritol 2,4-cyclodiphosphate synthase from Edwardsiella ictaluri (strain 93-146).